Here is a 55-residue protein sequence, read N- to C-terminus: Ferredoxin (55 aa).

4Fe-4S ferredoxin-type domains are found at residues 2-27 and 28-55; these read YFIT…SPGD and SVYV…PQQK. Residues C8, C11, C14, C18, C37, C40, C43, and C47 each contribute to the [4Fe-4S] cluster site.

[4Fe-4S] cluster is required as a cofactor.

Ferredoxins are iron-sulfur proteins that transfer electrons in a wide variety of metabolic reactions. The sequence is that of Ferredoxin from Acetivibrio thermocellus (Hungateiclostridium thermocellum).